The sequence spans 310 residues: Acetyl-coenzyme A carboxylase carboxyl transferase subunit alpha (310 aa).

Residues 31–285 (SFERELRIIN…KQKILRRLKQ (255 aa)) form the CoA carboxyltransferase C-terminal domain.

It belongs to the AccA family. In terms of assembly, acetyl-CoA carboxylase is a heterohexamer composed of biotin carboxyl carrier protein (accB), biotin carboxylase (accC) and two subunits each of ACCase subunit alpha (accA) and ACCase subunit beta (accD).

The protein resides in the plastid. The protein localises to the chloroplast. It catalyses the reaction N(6)-carboxybiotinyl-L-lysyl-[protein] + acetyl-CoA = N(6)-biotinyl-L-lysyl-[protein] + malonyl-CoA. It functions in the pathway lipid metabolism; malonyl-CoA biosynthesis; malonyl-CoA from acetyl-CoA: step 1/1. Functionally, component of the acetyl coenzyme A carboxylase (ACC) complex. First, biotin carboxylase catalyzes the carboxylation of biotin on its carrier protein (BCCP) and then the CO(2) group is transferred by the carboxyltransferase to acetyl-CoA to form malonyl-CoA. In Cyanidioschyzon merolae (strain NIES-3377 / 10D) (Unicellular red alga), this protein is Acetyl-coenzyme A carboxylase carboxyl transferase subunit alpha.